The chain runs to 241 residues: Thyroid transcription factor 1-associated protein 26 (241 aa).

Disordered stretches follow at residues 1-22 (MAPV…GEGV) and 182-205 (KRAA…RQYK). Basic and acidic residues predominate over residues 186 to 202 (KKQEFERRKQEREEAQR).

This sequence belongs to the TAP26 family. In terms of assembly, interacts with NKX2-1. As to expression, ubiquitously expressed. In lung, expression is restricted to the alveolar epithelial cells.

The protein resides in the nucleus. Its function is as follows. Component of the transcription complexes of the pulmonary surfactant-associated protein-B (SFTPB) and -C (SFTPC). Enhances homeobox protein Nkx-2.1-activated SFTPB and SFTPC promoter activities. The sequence is that of Thyroid transcription factor 1-associated protein 26 (CCDC59) from Homo sapiens (Human).